A 90-amino-acid polypeptide reads, in one-letter code: Actobindin-B/C (90 aa).

WH2 domains are found at residues 4–21 (TANP…LKHA) and 40–57 (DHSS…LKHV). Positions 57-90 (VETQDRSAPVTEGATVKSNNHSALLGEIKSKAQE) are disordered.

As to quaternary structure, monomer.

Is able to bind two actin monomers at high concentrations of G-actin. Inhibits actin polymerization by sequestering G-actin and stabilizing actin dimers. In Dictyostelium discoideum (Social amoeba), this protein is Actobindin-B/C (abnB).